The primary structure comprises 384 residues: Formate-dependent phosphoribosylglycinamide formyltransferase (384 aa).

Residues 14–15 (EL) and Glu-74 contribute to the N(1)-(5-phospho-beta-D-ribosyl)glycinamide site. ATP-binding positions include Arg-106, Lys-147, 152–157 (SSGKGQ), 187–190 (EEFI), and Glu-195. In terms of domain architecture, ATP-grasp spans 111 to 300 (RLAAETLGLA…EFALHVRAIL (190 aa)). 2 residues coordinate Mg(2+): Glu-259 and Glu-271. Residues Asp-278, Lys-348, and 355–356 (RR) each bind N(1)-(5-phospho-beta-D-ribosyl)glycinamide.

The protein belongs to the PurK/PurT family. As to quaternary structure, homodimer.

It carries out the reaction N(1)-(5-phospho-beta-D-ribosyl)glycinamide + formate + ATP = N(2)-formyl-N(1)-(5-phospho-beta-D-ribosyl)glycinamide + ADP + phosphate + H(+). The protein operates within purine metabolism; IMP biosynthesis via de novo pathway; N(2)-formyl-N(1)-(5-phospho-D-ribosyl)glycinamide from N(1)-(5-phospho-D-ribosyl)glycinamide (formate route): step 1/1. Its function is as follows. Catalyzes two reactions: the first one is the production of beta-formyl glycinamide ribonucleotide (GAR) from formate, ATP and beta GAR; the second, a side reaction, is the production of acetyl phosphate and ADP from acetate and ATP. Functionally, involved in the de novo purine biosynthesis. Catalyzes the transfer of formate to 5-phospho-ribosyl-glycinamide (GAR), producing 5-phospho-ribosyl-N-formylglycinamide (FGAR). Formate is provided by PurU via hydrolysis of 10-formyl-tetrahydrofolate. The sequence is that of Formate-dependent phosphoribosylglycinamide formyltransferase from Bacillus subtilis (strain 168).